We begin with the raw amino-acid sequence, 292 residues long: Elongation factor Ts (292 aa).

Positions threonine 79–valine 82 are involved in Mg(2+) ion dislocation from EF-Tu.

It belongs to the EF-Ts family.

It localises to the cytoplasm. Associates with the EF-Tu.GDP complex and induces the exchange of GDP to GTP. It remains bound to the aminoacyl-tRNA.EF-Tu.GTP complex up to the GTP hydrolysis stage on the ribosome. This is Elongation factor Ts from Xanthomonas campestris pv. campestris (strain B100).